Here is an 867-residue protein sequence, read N- to C-terminus: DNA mismatch repair protein MutS (867 aa).

An ATP-binding site is contributed by Gly-609 to Ser-616.

This sequence belongs to the DNA mismatch repair MutS family.

In terms of biological role, this protein is involved in the repair of mismatches in DNA. It is possible that it carries out the mismatch recognition step. This protein has a weak ATPase activity. This is DNA mismatch repair protein MutS from Latilactobacillus sakei subsp. sakei (strain 23K) (Lactobacillus sakei subsp. sakei).